Here is a 204-residue protein sequence, read N- to C-terminus: Urease accessory protein UreG (204 aa).

A GTP-binding site is contributed by 11 to 18; it reads GPVGAGKT.

This sequence belongs to the SIMIBI class G3E GTPase family. UreG subfamily. As to quaternary structure, homodimer. UreD, UreF and UreG form a complex that acts as a GTP-hydrolysis-dependent molecular chaperone, activating the urease apoprotein by helping to assemble the nickel containing metallocenter of UreC. The UreE protein probably delivers the nickel.

The protein localises to the cytoplasm. Its function is as follows. Facilitates the functional incorporation of the urease nickel metallocenter. This process requires GTP hydrolysis, probably effectuated by UreG. The chain is Urease accessory protein UreG from Staphylococcus aureus (strain bovine RF122 / ET3-1).